A 65-amino-acid polypeptide reads, in one-letter code: Alpha-insect toxin BotIT1 (65 aa).

One can recognise an LCN-type CS-alpha/beta domain in the interval 2 to 64 (RDAYIAQNYN…VPIRIPGKCH (63 aa)). 4 cysteine pairs are disulfide-bonded: cysteine 12–cysteine 63, cysteine 16–cysteine 36, cysteine 22–cysteine 46, and cysteine 26–cysteine 48.

Belongs to the long (4 C-C) scorpion toxin superfamily. Sodium channel inhibitor family. Alpha subfamily. In terms of tissue distribution, expressed by the venom gland.

The protein resides in the secreted. Its function is as follows. Alpha toxins bind voltage-independently at site-3 of sodium channels (Nav) and inhibit the inactivation of the activated channels, thereby blocking neuronal transmission. This contractive toxin is highly toxic to insects and barely toxic to mammals. The polypeptide is Alpha-insect toxin BotIT1 (Buthus occitanus tunetanus (Common European scorpion)).